The chain runs to 298 residues: Ribosomal protein uL3 glutamine methyltransferase (298 aa).

The protein belongs to the protein N5-glutamine methyltransferase family. PrmB subfamily.

It catalyses the reaction L-glutaminyl-[ribosomal protein uL3] + S-adenosyl-L-methionine = N(5)-methyl-L-glutaminyl-[ribosomal protein uL3] + S-adenosyl-L-homocysteine + H(+). In terms of biological role, methylates large ribosomal subunit protein uL3 on a specific glutamine residue. The polypeptide is Ribosomal protein uL3 glutamine methyltransferase (Bordetella pertussis (strain Tohama I / ATCC BAA-589 / NCTC 13251)).